The primary structure comprises 451 residues: ATP-dependent protease ATPase subunit HslU (451 aa).

Residues I26, 68–73 (GVGKTE), D263, E328, and R400 contribute to the ATP site.

It belongs to the ClpX chaperone family. HslU subfamily. A double ring-shaped homohexamer of HslV is capped on each side by a ring-shaped HslU homohexamer. The assembly of the HslU/HslV complex is dependent on binding of ATP.

It is found in the cytoplasm. Functionally, ATPase subunit of a proteasome-like degradation complex; this subunit has chaperone activity. The binding of ATP and its subsequent hydrolysis by HslU are essential for unfolding of protein substrates subsequently hydrolyzed by HslV. HslU recognizes the N-terminal part of its protein substrates and unfolds these before they are guided to HslV for hydrolysis. The chain is ATP-dependent protease ATPase subunit HslU from Dichelobacter nodosus (strain VCS1703A).